A 555-amino-acid polypeptide reads, in one-letter code: WRKY transcription factor WRKY24 (555 aa).

Disordered stretches follow at residues 133 to 183 and 197 to 248; these read TAPA…AGAN and SEMA…CTFP. Over residues 163-183 the composition is skewed to low complexity; it reads QQQQQPWGYQQQPAGMDAGAN. The segment at residues 214-278 is a DNA-binding region (WRKY 1); the sequence is SQRRSSDDGY…YKGTHNHAKP (65 aa). Residues 253 to 259 carry the Nuclear localization signal motif; the sequence is KKKVERS. Residues 270 to 365 are disordered; the sequence is KGTHNHAKPQ…DGEGISMAGN (96 aa). Composition is skewed to polar residues over residues 277-294 and 310-320; these read KPQNTRRNSGSSAAQVLQ and TAATPENSSAS. The span at 347 to 356 shows a compositional bias: basic and acidic residues; it reads DSKRWRKDGD. Positions 379-444 form a DNA-binding region, WRKY 2; it reads SDIDILDDGY…YEGKHNHDVP (66 aa). Residues 466 to 555 form a transcription repression of gibberellic acid (GA)-induced promoters region; sequence HPYLPNQPPP…DDMFFQNSLY (90 aa). Positions 514 to 555 are disordered; it reads FDDARGSYMSQHQQQQRQNDAMHASRAKEEPGDDMFFQNSLY.

It belongs to the WRKY group II-a family. In terms of tissue distribution, expressed in aleurone cells. Mostly expressed in aleurone layers and leaves, and, to a lower extent, in roots, panicles and embryos.

The protein localises to the nucleus. Transcription activator. Interacts specifically with the W box (5'-(T)TGAC[CT]-3'), a frequently occurring elicitor-responsive cis-acting element. Negative regulator of both gibberellic acid (GA) and abscisic acid (ABA) signaling in aleurone cells, probably by interfering with GAM1, via the specific repression of GA- and ABA-induced promoters. This is WRKY transcription factor WRKY24 from Oryza sativa subsp. japonica (Rice).